The chain runs to 446 residues: Dihydroorotate dehydrogenase (quinone), mitochondrial (446 aa).

A mitochondrion-targeting transit peptide spans 1–13 (MHSRPLPTLGRHA). Residues 40–57 (AILYTAGILGGAFAGYYL) form a helical membrane-spanning segment. FMN-binding positions include 125 to 129 (AGLDK) and Ser-149. Lys-129 serves as a coordination point for substrate. Position 174-178 (174-178 (NRYGF)) interacts with substrate. Residues Asn-222 and Asn-252 each coordinate FMN. Residues Asn-252 and 252–257 (NVSSPN) each bind substrate. Catalysis depends on Ser-255, which acts as the Nucleophile. FMN is bound by residues Lys-303 and Ser-331. Substrate is bound at residue 332 to 333 (NT). FMN is bound by residues Gly-357, Gly-387, and 408–409 (YT).

The protein belongs to the dihydroorotate dehydrogenase family. Type 2 subfamily. FMN serves as cofactor.

The protein localises to the mitochondrion inner membrane. It catalyses the reaction (S)-dihydroorotate + a quinone = orotate + a quinol. Its pathway is pyrimidine metabolism; UMP biosynthesis via de novo pathway; orotate from (S)-dihydroorotate (quinone route): step 1/1. The activity is dependent of the presence of oxygen. Its function is as follows. Catalyzes the conversion of dihydroorotate to orotate with quinone as electron acceptor. The protein is Dihydroorotate dehydrogenase (quinone), mitochondrial (URA9) of Lachancea kluyveri (strain ATCC 58438 / CBS 3082 / BCRC 21498 / NBRC 1685 / JCM 7257 / NCYC 543 / NRRL Y-12651) (Yeast).